Here is a 461-residue protein sequence, read N- to C-terminus: Regulatory protein AtoC (461 aa).

Residues 6–120 (RILIVDDEDN…ELNLIVQRAL (115 aa)) enclose the Response regulatory domain. Asp55 is subject to 4-aspartylphosphate. At His73 the chain carries Phosphohistidine. One can recognise a Sigma-54 factor interaction domain in the interval 145–374 (ILTNSPAMMD…LSNVIERAVV (230 aa)). ATP is bound by residues 173 to 180 (GESGTGKE) and 236 to 245 (ANEGTLLLDE). The H-T-H motif DNA-binding region spans 433–452 (RTRTALMLGISRRALMYKLQ).

In terms of processing, phosphorylated by AtoS. Contains two phosphorylation sites, which are both involved in the transduction of the acetoacetate signal. Asp-55 is probably the primary phosphorylation site, but either both residues can be phosphorylated independently by AtoS or the phosphate group can be transferred between them. Post-translationally, the N-terminus is blocked.

It localises to the cytoplasm. Its function is as follows. Member of the two-component regulatory system AtoS/AtoC. In the presence of acetoacetate, AtoS/AtoC stimulates the expression of the atoDAEB operon, leading to short chain fatty acid catabolism and activation of the poly-(R)-3-hydroxybutyrate (cPHB) biosynthetic pathway. Also induces the operon in response to spermidine. Involved in the regulation of motility and chemotaxis, via transcriptional induction of the flagellar regulon. AtoC acts by binding directly to the promoter region of the target genes. In addition to its role as a transcriptional regulator, functions as a post-translational regulator that inhibits polyamine biosynthesis via regulation of ornithine decarboxylase (ODC). The protein is Regulatory protein AtoC (atoC) of Escherichia coli (strain K12).